The primary structure comprises 197 residues: MCLPILVVMDSIINIDRVQIFIFDCINFLINDISLCYKIGIMNFLSPIFSTEIKSSEIKSNLMELDLSENYEQIIHNFVQYYRIINLFGVSYSEKYYNEQIHGFPNHYSIHLSGNISGKYRLDNYKSFLSKFNELGIKNIHYNNTNFYYQLINPKCISLVMFGSVYHQNKLCNIISVINLRVIHNIPKIINHMVIIT.

This is an uncharacterized protein from Acanthamoeba polyphaga (Amoeba).